Reading from the N-terminus, the 230-residue chain is Heptaprenylglyceryl phosphate synthase (230 aa).

Lys12 contributes to the sn-glycerol 1-phosphate binding site. Positions 14 and 40 each coordinate Mg(2+). Sn-glycerol 1-phosphate-binding positions include 159-164, Gly189, and 209-210; these read YLEYSG and GN.

The protein belongs to the GGGP/HepGP synthase family. Group I subfamily. In terms of assembly, homodimer. Mg(2+) is required as a cofactor.

It carries out the reaction sn-glycerol 1-phosphate + all-trans-heptaprenyl diphosphate = 3-heptaprenyl-sn-glycero-1-phosphate + diphosphate. The protein operates within membrane lipid metabolism; glycerophospholipid metabolism. Prenyltransferase that catalyzes in vivo the transfer of the heptaprenyl moiety of heptaprenyl pyrophosphate (HepPP; 35 carbon atoms) to the C3 hydroxyl of sn-glycerol-1-phosphate (G1P), producing heptaprenylglyceryl phosphate (HepGP). This reaction is an ether-bond-formation step in the biosynthesis of archaea-type G1P-based membrane lipids found in Bacillales. This chain is Heptaprenylglyceryl phosphate synthase, found in Bacillus pumilus (strain SAFR-032).